A 361-amino-acid chain; its full sequence is Fructose-1,6-bisphosphatase class 1 2 (361 aa).

Mg(2+)-binding residues include glutamate 110, aspartate 134, leucine 136, and aspartate 137. Substrate-binding positions include 137 to 140, asparagine 231, tyrosine 264, and lysine 294; that span reads DGSS. Glutamate 300 contacts Mg(2+).

The protein belongs to the FBPase class 1 family. As to quaternary structure, homotetramer. Mg(2+) serves as cofactor.

It is found in the cytoplasm. It catalyses the reaction beta-D-fructose 1,6-bisphosphate + H2O = beta-D-fructose 6-phosphate + phosphate. Its pathway is carbohydrate biosynthesis; gluconeogenesis. The chain is Fructose-1,6-bisphosphatase class 1 2 from Salinibacter ruber (strain DSM 13855 / M31).